Here is a 447-residue protein sequence, read N- to C-terminus: Peptide-N(4)-(N-acetyl-beta-glucosaminyl)asparagine amidase (447 aa).

Residues cysteine 209, cysteine 212, cysteine 241, and cysteine 244 each contribute to the Zn(2+) site. Cysteine 267 acts as the Nucleophile in catalysis. Active-site residues include histidine 294 and aspartate 311.

Belongs to the transglutaminase-like superfamily. PNGase family. It depends on Zn(2+) as a cofactor.

It localises to the cytoplasm. It carries out the reaction Hydrolysis of an N(4)-(acetyl-beta-D-glucosaminyl)asparagine residue in which the glucosamine residue may be further glycosylated, to yield a (substituted) N-acetyl-beta-D-glucosaminylamine and a peptide containing an aspartate residue.. Specifically deglycosylates the denatured form of N-linked glycoproteins in the cytoplasm and assists their proteasome-mediated degradation. Cleaves the beta-aspartyl-glucosamine (GlcNAc) of the glycan and the amide side chain of Asn, converting Asn to Asp. Prefers proteins containing high-mannose over those bearing complex type oligosaccharides. Can recognize misfolded proteins in the endoplasmic reticulum that are exported to the cytosol to be destroyed and deglycosylate them, while it has no activity toward native proteins. Deglycosylation is a prerequisite for subsequent proteasome-mediated degradation of some, but not all, misfolded glycoproteins. The chain is Peptide-N(4)-(N-acetyl-beta-glucosaminyl)asparagine amidase (PNG1) from Oryza sativa subsp. japonica (Rice).